Consider the following 560-residue polypeptide: MPKFDVAKHDLERLVGKEFTVDEWEDLFLYAKCELDDIWEHEGKIYFKADAKDTNRPDLWSAEGIARQVRWALGMLRGLPRYSIEESNVMVYVDENLKDIRPYGVYAIVEDLELDEEALKQIIQLQEKVALTLGRKRKEVAIGTFDFDKLSPPFYYKAVEPQKIKFIPLNCEREMSADEILEEHEKGKEYGHLIKGRPYYPLLVDSEGNVLSMPPVINSETHGKVTEETKSIFIDITGWNLETIMLALNVIVTALAERGGKIRTVRVIYKDFELKTPDLTPKEFEVDLNYIKRLAGVELTDKDIKDLLERMMYEVDFVDRRVKLRYPAFRNDIMHPRDVLEDVLIAYGYNNIEPEEPELAVQGKGDDFVDFENAIRDLMVGFGLQEVMTFNLTNREAQFDKMNIPEEDIVEIENPISQKWSALRRWLLPSLMEFLSQNTHEEYPQRIFEVGKATLIDESRETKTISESKLVVAIAHPKVTFTEAKEILDSVLRHLGAEYTIREIEYGSFIPGRAGEIIVEGKKVGIIGEIHPQVLENWGVEMPVAAFEIFLRPFYKGSFL.

One can recognise a B5 domain in the interval 279-354 (LTPKEFEVDL…IAYGYNNIEP (76 aa)). The Mg(2+) site is built by aspartate 332, aspartate 338, glutamate 341, and aspartate 342.

The protein belongs to the phenylalanyl-tRNA synthetase beta subunit family. Type 2 subfamily. In terms of assembly, tetramer of two alpha and two beta subunits. The cofactor is Mg(2+).

The protein localises to the cytoplasm. It carries out the reaction tRNA(Phe) + L-phenylalanine + ATP = L-phenylalanyl-tRNA(Phe) + AMP + diphosphate + H(+). The polypeptide is Phenylalanine--tRNA ligase beta subunit (Thermococcus sibiricus (strain DSM 12597 / MM 739)).